The following is a 35-amino-acid chain: Augerpeptide hheTx4 (35 aa).

Post-translationally, contains 4 disulfide bonds. In terms of tissue distribution, expressed by the venom duct.

Its subcellular location is the secreted. This is Augerpeptide hheTx4 from Hastula hectica (Sea snail).